The sequence spans 462 residues: Chromosomal replication initiator protein DnaA (462 aa).

The tract at residues 1-83 (MSLSLWQQCL…LRFEVGSKPA (83 aa)) is domain I, interacts with DnaA modulators. A domain II region spans residues 83–125 (AVRAHSHPVTASVSAPVAPVTRSAPVRPSWDSSPAQPELSYRS). Residues 105–127 (SAPVRPSWDSSPAQPELSYRSNV) form a disordered region. Positions 112 to 127 (WDSSPAQPELSYRSNV) are enriched in polar residues. The segment at 126 to 342 (NVNPKHTFDN…GALNRVIANA (217 aa)) is domain III, AAA+ region. Positions 170, 172, 173, and 174 each coordinate ATP. The segment at 343–462 (NFTGRAITID…FSNLIRTLSS (120 aa)) is domain IV, binds dsDNA.

Belongs to the DnaA family. In terms of assembly, oligomerizes as a right-handed, spiral filament on DNA at oriC.

It is found in the cytoplasm. In terms of biological role, plays an essential role in the initiation and regulation of chromosomal replication. ATP-DnaA binds to the origin of replication (oriC) to initiate formation of the DNA replication initiation complex once per cell cycle. Binds the DnaA box (a 9 base pair repeat at the origin) and separates the double-stranded (ds)DNA. Forms a right-handed helical filament on oriC DNA; dsDNA binds to the exterior of the filament while single-stranded (ss)DNA is stabiized in the filament's interior. The ATP-DnaA-oriC complex binds and stabilizes one strand of the AT-rich DNA unwinding element (DUE), permitting loading of DNA polymerase. After initiation quickly degrades to an ADP-DnaA complex that is not apt for DNA replication. Binds acidic phospholipids. This is Chromosomal replication initiator protein DnaA from Yersinia enterocolitica serotype O:8 / biotype 1B (strain NCTC 13174 / 8081).